The sequence spans 177 residues: Large ribosomal subunit protein uL6 (177 aa).

Belongs to the universal ribosomal protein uL6 family. As to quaternary structure, part of the 50S ribosomal subunit.

Its function is as follows. This protein binds to the 23S rRNA, and is important in its secondary structure. It is located near the subunit interface in the base of the L7/L12 stalk, and near the tRNA binding site of the peptidyltransferase center. The chain is Large ribosomal subunit protein uL6 from Edwardsiella ictaluri (strain 93-146).